Here is a 607-residue protein sequence, read N- to C-terminus: Major facilitator superfamily multidrug transporter mdrA (607 aa).

A run of 12 helical transmembrane segments spans residues 77-97 (MTVAVSTLAVALVSSAYTGGV), 110-130 (VATLGVSLFVLGFAIGPLLWA), 139-159 (QIIFTVTYCALTAFNAGSAGA), 170-190 (FFAGAFGASPLTNAGGVIADM), 202-222 (LFAAAPFLGPVLGPIIGGFLG), 229-249 (WVMGFLGAFSGAVWIICTIFV), 305-325 (PIVFLLSLYMAIIYGTLYMLF), 342-362 (VSSLPFLGIMVGMMFAVTYSV), 385-405 (LPPTLIASVAIPIGLFWFAWT), 413-433 (IVCILAGAPFGFGMVLVFLGI), 443-463 (IFAASVLAANSVLRSIFGAVF), and 478-498 (WASSIPAFLALACVPFPFLFY). The tract at residues 523–583 (EQMKQAPEPE…ASTRTASSLR (61 aa)) is disordered. Residues 553–564 (DVSETESNVEEL) are compositionally biased toward acidic residues. Residues 572-583 (SRASTRTASSLR) show a composition bias toward low complexity.

Belongs to the major facilitator superfamily. DHA1 family. Polyamines/proton antiporter (TC 2.A.1.2.16) subfamily.

It is found in the cell membrane. Its function is as follows. MFS transporter involved in the basal level of azole susceptibility. Confers resistance to voriconazole and, to a lesser extent, to fluconazole. The polypeptide is Major facilitator superfamily multidrug transporter mdrA (Aspergillus fumigatus (strain ATCC MYA-4609 / CBS 101355 / FGSC A1100 / Af293) (Neosartorya fumigata)).